A 365-amino-acid chain; its full sequence is Zinc finger MYND domain-containing protein 12 (365 aa).

8 residues coordinate Zn(2+): cysteine 17, cysteine 20, cysteine 28, cysteine 31, cysteine 37, histidine 41, histidine 50, and cysteine 54. The MYND-type; atypical zinc-finger motif lies at 17–54 (CEVCEAPAERVCAACTVTYYCGVVHQKADWDSIHEKIC). 2 TPR repeats span residues 172–205 (SLLH…ASCA) and 214–247 (SGGY…WHAY).

In terms of tissue distribution, expressed predominantly in the testis.

The protein localises to the cell projection. The protein resides in the cilium. Its subcellular location is the flagellum. Functionally, required for sperm flagellum function and male fertility. In Homo sapiens (Human), this protein is Zinc finger MYND domain-containing protein 12 (ZMYND12).